Here is a 371-residue protein sequence, read N- to C-terminus: Neuropeptide Y receptor type 6 (371 aa).

Topologically, residues 1-31 (MEVLTNQPTPNKTSGKSNNSAFFYFESCQPP) are extracellular. 2 N-linked (GlcNAc...) asparagine glycosylation sites follow: Asn-11 and Asn-18. The chain crosses the membrane as a helical span at residues 32 to 52 (FLAILLLLIAYTVILIMGIFG). At 53 to 82 (NLSLIIIIFKKQREAQNVTNILIANLSLSD) the chain is on the cytoplasmic side. The helical transmembrane segment at 83-103 (ILVCVMCIPFTVIYTLMDHWV) threads the bilayer. The Extracellular segment spans residues 104–111 (FGNTMCKL). Residues Cys-109 and Cys-196 are joined by a disulfide bond. The helical transmembrane segment at 112-132 (TSYVQSVSVSVSIFSLVLIAI) threads the bilayer. Topologically, residues 133–150 (ERYQLIVNPRGWKPRVAH) are cytoplasmic. Residues 151–171 (AYWGIILIWLISLTLSIPLFL) form a helical membrane-spanning segment. Topologically, residues 172–206 (SYHLTNEPFHNLSLPTDIYTHQVACVEIWPSKLNQ) are extracellular. A glycan (N-linked (GlcNAc...) asparagine) is linked at Asn-182. A helical membrane pass occupies residues 207 to 227 (LLFSTSLFMLQYFVPLGFILI). At 228–263 (CYLKIVLCLRKRTRQVDRRKENKSRLNENKRVNVML) the chain is on the cytoplasmic side. A helical transmembrane segment spans residues 264–284 (ISIVVTFGACWLPLNIFNVIF). Residues 285 to 297 (DWYHEMLMSCHHD) lie on the Extracellular side of the membrane. A helical membrane pass occupies residues 298–318 (LVFVVCHLIAMVSTCINPLFY). The Cytoplasmic segment spans residues 319 to 371 (GFLNKNFQKDLMMLIHHCWCGEPQESYENIAMSTMHTDESKGSLKLAHIPTGI). Cys-336 carries S-palmitoyl cysteine lipidation.

It belongs to the G-protein coupled receptor 1 family. In terms of tissue distribution, kidney and discrete regions of the hypothalamus including the suprachiasmatic nucleus, anterior hypothalamus, bed nucleus stria terminalis, and the ventromedial nucleus.

The protein localises to the cell membrane. Its function is as follows. Receptor for neuropeptide Y and peptide YY. The rank order of affinity of this receptor for pancreatic polypeptides is NPY = PYY &gt;= NPY (2-36) = [Leu-31, Pro-34] NPY &gt; NPY (13-36) &gt; PP. The activity of this receptor is mediated by G proteins that inhibits adenylate cyclase activity. This Mus musculus (Mouse) protein is Neuropeptide Y receptor type 6 (Npy6r).